The following is a 576-amino-acid chain: Polypeptide N-acetylgalactosaminyltransferase 12 (576 aa).

Topologically, residues 1 to 19 are cytoplasmic; the sequence is MWGRAVRRRCPRGLRRGRE. Residues 20–37 form a helical; Signal-anchor for type II membrane protein membrane-spanning segment; that stretch reads ALLALLALAGLGALLRAR. Residues 38–58 form a disordered region; the sequence is SRSGTVDPGPPRTPLPGRHEP. At 38 to 576 the chain is on the lumenal side; it reads SRSGTVDPGP…QRWFFKERMS (539 aa). Intrachain disulfides connect cysteine 120/cysteine 353, cysteine 344/cysteine 417, cysteine 453/cysteine 474, cysteine 501/cysteine 516, and cysteine 542/cysteine 561. The segment at 130–239 is catalytic subdomain A; sequence LPKTSVVIAF…EGWLEPLLQR (110 aa). Residues aspartate 171 and arginine 200 each contribute to the substrate site. Residues aspartate 223 and histidine 225 each coordinate Mn(2+). The interval 299–361 is catalytic subdomain B; the sequence is VIRSPTMAGG…PCSHVGHVFP (63 aa). Tryptophan 330 contributes to the substrate binding site. Histidine 358 contacts Mn(2+). Substrate is bound at residue tyrosine 366. A Ricin B-type lectin domain is found at 440 to 572; that stretch reads FFGMLQNRGL…NSDNQRWFFK (133 aa).

Belongs to the glycosyltransferase 2 family. GalNAc-T subfamily. Mn(2+) is required as a cofactor.

The protein localises to the golgi apparatus membrane. It carries out the reaction L-seryl-[protein] + UDP-N-acetyl-alpha-D-galactosamine = a 3-O-[N-acetyl-alpha-D-galactosaminyl]-L-seryl-[protein] + UDP + H(+). It catalyses the reaction L-threonyl-[protein] + UDP-N-acetyl-alpha-D-galactosamine = a 3-O-[N-acetyl-alpha-D-galactosaminyl]-L-threonyl-[protein] + UDP + H(+). Its pathway is protein modification; protein glycosylation. Its function is as follows. Catalyzes the initial reaction in O-linked oligosaccharide biosynthesis, the transfer of an N-acetyl-D-galactosamine residue to a serine or threonine residue on the protein receptor. Has activity toward non-glycosylated peptides such as Muc5AC, Muc1a and EA2, and no detectable activity with Muc2 and Muc7. Displays enzymatic activity toward the Gal-NAc-Muc5AC glycopeptide, but no detectable activity to mono-GalNAc-glycosylated Muc1a, Muc2, Muc7 and EA2. May play an important role in the initial step of mucin-type oligosaccharide biosynthesis in digestive organs. In Mus musculus (Mouse), this protein is Polypeptide N-acetylgalactosaminyltransferase 12 (Galnt12).